Consider the following 286-residue polypeptide: Nucleotide-binding protein PSPA7_5038 (286 aa).

Residue glycine 8–serine 15 participates in ATP binding. Aspartate 60–asparagine 63 lines the GTP pocket.

It belongs to the RapZ-like family.

In terms of biological role, displays ATPase and GTPase activities. The protein is Nucleotide-binding protein PSPA7_5038 of Pseudomonas paraeruginosa (strain DSM 24068 / PA7) (Pseudomonas aeruginosa (strain PA7)).